A 586-amino-acid chain; its full sequence is MTTASSSASQLQQRLPEEKPWPQLSGSNADAQTFKCKYVTNHNSLGDGNFSVVKECMNIHTKDLYAMKLIKKQTVKNKIQLIQREFDLLRSISEKIRDMEKKNEHSLDIFEGHHHILQLFDYFETADNIVLITQLCQKGDLYEKIVENQCLDLETQVTSYCACLVSVLEFLHSQGIVHRDLKAENVLFRLRVNENEKNLQGEHHGDFKYDLLAHDLVLADFGLAAEYNTSKVNSLKEFVGTISYIAPEIVKCKGVGEMTPDQVGKLDKYGCPVDIWALGVLTYFMAFGYTPFDCTTDDETLECISKCDYYVDEQMMHDPKYEQFWNFVQCCFTIDPAVRRSAKNLKQHPFIKDYFATSNSLNTKDTPNFSFHPTIRRVSSTASMHTLRSPSKSRKTTTLAYLNMDGGSSETSTAFSSKMDLPDLYVDRTINSRERSLNRIRDTLKKTLSMTSLKPAGTFDYLHANKNGTSLSSSKSGLVKKNSTFVLDPKPPKNSLMNGCFSTTPESRSNFNTPKTLSRQGSSTSVKKYVNEVDLLLTPRTASMSSNDTTAINDYDTTNDKNPARKHAASFQVNVDDSDGDETMQI.

Residues 1 to 26 (MTTASSSASQLQQRLPEEKPWPQLSG) form a disordered region. Positions 39–351 (VTNHNSLGDG…AKNLKQHPFI (313 aa)) constitute a Protein kinase domain. ATP-binding positions include 45–53 (LGDGNFSVV) and K68. D180 functions as the Proton acceptor in the catalytic mechanism. The segment at 503 to 524 (TTPESRSNFNTPKTLSRQGSST) is disordered. T504 carries the phosphothreonine modification. Phosphoserine occurs at positions 509 and 518. T538 carries the post-translational modification Phosphothreonine. S578 is modified (phosphoserine).

It belongs to the protein kinase superfamily. Ser/Thr protein kinase family. As to quaternary structure, interacts with RIM11.

The protein resides in the cytoplasm. It localises to the nucleus. The enzyme catalyses L-seryl-[protein] + ATP = O-phospho-L-seryl-[protein] + ADP + H(+). The catalysed reaction is L-threonyl-[protein] + ATP = O-phospho-L-threonyl-[protein] + ADP + H(+). Serine/threonine protein kinase shown to have protein phosphorylation activity in vitro. This Saccharomyces cerevisiae (strain ATCC 204508 / S288c) (Baker's yeast) protein is Serine/threonine-protein kinase TDA1 (TDA1).